A 544-amino-acid polypeptide reads, in one-letter code: Rubrofusarin-specific efflux pump aurT (544 aa).

Residues 1-12 (MTDNTDMEKLDR) show a composition bias toward basic and acidic residues. The disordered stretch occupies residues 1 to 42 (MTDNTDMEKLDRATTPTPIPNEAPPTSEPSESKPEEAEDESK). Pro residues predominate over residues 17–27 (TPIPNEAPPTS). Residues 30 to 42 (SESKPEEAEDESK) are compositionally biased toward basic and acidic residues. 8 helical membrane-spanning segments follow: residues 45 to 65 (HGLK…LVAL), 89 to 111 (WYAS…IFTF), 116 to 136 (TVYL…GVAP), 146 to 166 (AIAG…ITTV), 177 to 197 (GMMG…GGAF), 205 to 225 (WCFY…ILLF), 246 to 266 (WGNL…QWGG), and 276 to 296 (IVAL…IQIW). Asn-300 carries an N-linked (GlcNAc...) asparagine glycan. The next 6 membrane-spanning stretches (helical) occupy residues 318–338 (IFAF…PIWF), 357–377 (VLSL…VGWF), 380–400 (VFFS…TFVV), 407–427 (WIGY…LASL), 444–464 (LMFF…QAVF), and 514–534 (YFYV…GIEW).

It belongs to the major facilitator superfamily. TCR/Tet family.

It is found in the cell membrane. It functions in the pathway pigment biosynthesis. Rubrofusarin-specific efflux pump; part of the gene cluster that mediates the biosynthesis of aurofusarin, a red mycelium pigment which is acting as a mycotoxin. The first step is performed by the polyketide synthase which condenses one acetyl-CoA and 6 malonyl-CoA units to form the first intermediate, the cyclic heptaketide and yellow pigment YWA1. The C2 hydroxyl group in the pyrone ring of YWA1 is probably formed during ring closure by an aldol-type cyclization reaction. The dehydratase aurZ then acts as the first tailoring enzyme in the aurofusarin biosynthetic pathway by converting YWA1 to nor-rubrofusarin. Nor-rubrofusarin is then methylated to rubrofusarin by the O-methyltransferase aurJ. Rubrofusarin is then transported across the plasma membrane by the rubrofusarin-specific pump aurT for further enzymatic processing by the extracellular complex composed of GIP1, aurF, aurO and aurS to yield aurofusarin. This Gibberella zeae (strain ATCC MYA-4620 / CBS 123657 / FGSC 9075 / NRRL 31084 / PH-1) (Wheat head blight fungus) protein is Rubrofusarin-specific efflux pump aurT.